We begin with the raw amino-acid sequence, 103 residues long: Histone H4 variant TH091 (103 aa).

Residues 1 to 20 are disordered; the sequence is MSGRDKGGKGLGKGGAKRHR. N-acetylserine is present on S2. N6-acetyllysine is present on residues K6, K9, K13, K17, and K21. A DNA-binding region spans residues 17 to 21; that stretch reads KRHRK.

Belongs to the histone H4 family. As to quaternary structure, the nucleosome is a histone octamer containing two molecules each of H2A, H2B, H3 and H4 assembled in one H3-H4 heterotetramer and two H2A-H2B heterodimers. The octamer wraps approximately 147 bp of DNA.

The protein localises to the nucleus. It is found in the chromosome. Functionally, core component of nucleosome. Nucleosomes wrap and compact DNA into chromatin, limiting DNA accessibility to the cellular machineries which require DNA as a template. Histones thereby play a central role in transcription regulation, DNA repair, DNA replication and chromosomal stability. DNA accessibility is regulated via a complex set of post-translational modifications of histones, also called histone code, and nucleosome remodeling. In Triticum aestivum (Wheat), this protein is Histone H4 variant TH091.